The primary structure comprises 613 residues: MSSLTSVELNFLVFRYLQESGFTHAAFTLGYEAGINKSNIDGNMVPPGALIKFVQKGLQYMEMEANLSNSEVDIDEDFSFFQPLDLISKDVKELQDMLREKKRKERDMEKERDRSKENDKGVEREHEGDRNRAKEKDRHEKQKEREREREKLEREKEREREKIEREKEREREKMEREIFEREKDRLKLEKEREIEREREREKIEREKSHEKQLGDADREMVIDQTDKEIAGDGSTGAEPMDIVMTPTSQTSHIPNSDVRILEGHTSEVCACAWSPSASLLASGSGDATARIWSIPEGSFKAVHTGRNINALILKHAKGKSNEKSKDVTTLDWNGEGTLLATGSCDGQARIWTLNGELISTLSKHKGPIFSLKWNKKGDYLLTGSVDRTAVVWDVKAEEWKQQFEFHSGPTLDVDWRNNVSFATSSTDSMIYLCKIGETRPAKTFTGHQGEVNCVKWDPTGSLLASCSDDSTAKIWNIKQSTFVHDLREHTKEIYTIRWSPTGPGTNNPNKQLTLASASFDSTVKLWDAELGKMLCSFNGHREPVYSLAFSPNGEYIASGSLDKSIHIWSIKEGKIVKTYTGNGGIFEVCWNKEGNKIAACFADNSVCVLDFRM.

The LisH domain occupies Thr5–Lys37. Disordered regions lie at residues Lys101–Met174 and Glu193–Gly214. WD repeat units lie at residues Gly263–Val302, Glu322–Ser362, Lys363–Gln402, Phe405–Thr443, Gly446–Asp485, Glu488–Ser536, Gly539–Thr580, and Asn582–Met613.

The protein resides in the nucleus. In terms of biological role, acts as a repressor of cold stress-regulated gene expression. Interacts specifically with and promotes deacetylation of histone H4. Plays a role in gene regulation for plant acclimation and tolerance to cold stress. The protein is WD40 repeat-containing protein HOS15 of Arabidopsis thaliana (Mouse-ear cress).